A 173-amino-acid chain; its full sequence is Cytochrome c-type biogenesis protein CcmE (173 aa).

The Cytoplasmic segment spans residues 1-8; that stretch reads MNPRRKSR. Residues 9-29 form a helical; Signal-anchor for type II membrane protein membrane-spanning segment; it reads FKLVIFVVLGIAIASGLMLYA. The Periplasmic segment spans residues 30 to 173; it reads LRQNIDLFYT…RDRQEKEGAK (144 aa). The heme site is built by histidine 131 and tyrosine 135. The interval 139-173 is disordered; that stretch reads ELGEKMQKVHKPMGIKAADLKGESERDRQEKEGAK. Residues 156–173 show a composition bias toward basic and acidic residues; that stretch reads ADLKGESERDRQEKEGAK.

It belongs to the CcmE/CycJ family.

Its subcellular location is the cell inner membrane. In terms of biological role, heme chaperone required for the biogenesis of c-type cytochromes. Transiently binds heme delivered by CcmC and transfers the heme to apo-cytochromes in a process facilitated by CcmF and CcmH. In Haemophilus influenzae (strain 86-028NP), this protein is Cytochrome c-type biogenesis protein CcmE.